The sequence spans 551 residues: Cytochrome P450 monooxygenase virE (551 aa).

Residues 1–25 form the signal peptide; it reads MPKPWVVFGLGTLVLFLWRLNKIGR. N-linked (GlcNAc...) asparagine glycosylation occurs at Asn-392. Cys-439 contacts heme.

This sequence belongs to the cytochrome P450 family. Heme is required as a cofactor.

Its pathway is secondary metabolite biosynthesis. Functionally, cytochrome P450 monooxygenase; part of the gene cluster that mediates the biosynthesis of virensols and trichoxide, fungal natural products that contain or are derived from a salicylaldehyde core. The pathway begins with the synthesis of the reduced chain in virensol C by the highly reducing polyketide synthase virA via condensation of one acetate and 8 malonate units. VirA has interesting programming rules since the first 2 ketides are fully reduced, the 3 following ketides undergo beta-dehydration, and the last 3 ketides are only reduced to beta-hydroxys to yield the trihydroxy portion. The production of aldehyde virensol C by virA alone is surprising, since virA does not contain a reductase (R) domain that is typically associated with reductive product release in HRPKS. The cupin-domain enzyme virC is involved in enhancing virA product turnover. The short-chain dehydrogenase virB then oxidizes the C-7 alcohol of virensol C to a ketone, yielding virensol D. Virensol D is further transformed to salicylaldehyde 5-deoxyaurocitrin by the short-chain dehydrogenase virD. VirD catalyzes the dehydrogenation of C-3 to form the beta-ketone aldehyde, which is followed by the generation of the nucleophilic C-2 that is required for the intramolecular aldol condensation between C-2 and C-7, itself followed by dehydration and aromatization which leads to salicylaldehyde 5-deoxyaurocitrin. While the dehydrogenation of virensol D is definitely catalyzed by virD, the aldol condensation and dehydration may be uncatalyzed or assisted by virD. The short chain dehydrogenase virG then converts salicylaldehyde 5-deoxyaurocitrin into virensol B which is further hydroxylated by the cytochrome P450 monooxygenase virE to yield the hydroquinone virensol A. VirI then may oxidize virensol A to form the quinone, while virH performs the epoxidation. Finally, the two remaining short-chain dehydrogenases, virK and virL, are probably responsible for reducing the ketones to the corresponding alcohols to furnish the epoxycyclohexanol structure in trichoxide. The sequence is that of Cytochrome P450 monooxygenase virE from Hypocrea virens (strain Gv29-8 / FGSC 10586) (Gliocladium virens).